The chain runs to 337 residues: DNA-directed RNA polymerase subunit alpha (337 aa).

The alpha N-terminal domain (alpha-NTD) stretch occupies residues 1-233 (MIQKNWQELI…DQLSVFVNFK (233 aa)). The alpha C-terminal domain (alpha-CTD) stretch occupies residues 249–337 (FNPALLKKVD…DLAKHYEDQY (89 aa)).

This sequence belongs to the RNA polymerase alpha chain family. In terms of assembly, homodimer. The RNAP catalytic core consists of 2 alpha, 1 beta, 1 beta' and 1 omega subunit. When a sigma factor is associated with the core the holoenzyme is formed, which can initiate transcription.

The enzyme catalyses RNA(n) + a ribonucleoside 5'-triphosphate = RNA(n+1) + diphosphate. DNA-dependent RNA polymerase catalyzes the transcription of DNA into RNA using the four ribonucleoside triphosphates as substrates. The protein is DNA-directed RNA polymerase subunit alpha of Bartonella bacilliformis (strain ATCC 35685 / KC583 / Herrer 020/F12,63).